Reading from the N-terminus, the 316-residue chain is MLP-like protein 34 (316 aa).

Belongs to the MLP family.

The chain is MLP-like protein 34 (MLP34) from Arabidopsis thaliana (Mouse-ear cress).